We begin with the raw amino-acid sequence, 339 residues long: Beta-ketoacyl-[acyl-carrier-protein] synthase III (339 aa).

Catalysis depends on residues cysteine 121 and histidine 257. The interval 258-262 (QANLR) is ACP-binding. The active site involves asparagine 288.

It belongs to the thiolase-like superfamily. FabH family. In terms of assembly, homodimer.

The protein resides in the cytoplasm. It catalyses the reaction malonyl-[ACP] + propanoyl-CoA + H(+) = 3-oxopentanoyl-[ACP] + CO2 + CoA. The enzyme catalyses 2-methylpropanoyl-CoA + malonyl-[ACP] + H(+) = 4-methyl-3-oxopentanoyl-[ACP] + CO2 + CoA. The catalysed reaction is malonyl-[ACP] + acetyl-CoA + H(+) = 3-oxobutanoyl-[ACP] + CO2 + CoA. It carries out the reaction butanoyl-CoA + malonyl-[ACP] + H(+) = 3-oxohexanoyl-[ACP] + CO2 + CoA. It participates in lipid metabolism; fatty acid biosynthesis. Its function is as follows. Catalyzes the condensation reaction of fatty acid synthesis by the addition to an acyl acceptor of two carbons from malonyl-ACP. Catalyzes the first condensation reaction which initiates fatty acid synthesis and may therefore play a role in governing the total rate of fatty acid production. Possesses both acetoacetyl-ACP synthase and acetyl transacylase activities. Propionyl-CoA and isobutyryl-CoA were the two most preferred substrates, although acetyl-CoA and butyryl-CoA could also be accepted and elongated. Involved in the biosynthesis of R1128 polyketide. This is Beta-ketoacyl-[acyl-carrier-protein] synthase III from Streptomyces lividans.